The following is a 459-amino-acid chain: Proton-coupled folate transporter (459 aa).

Met-1 carries the N-acetylmethionine modification. Topologically, residues 1-25 (MEGRVSPVGSSHRLLTAAVLFRGPV) are cytoplasmic. Position 6 is a phosphoserine (Ser-6). Residues 26-44 (EPLVFLANFALVLQGPLTT) form a helical membrane-spanning segment. Over 45-82 (QYIWHRISTELGYNGTRHRENCGNQSADPVLKEVETLT) the chain is Extracellular. Asn-58 and Asn-68 each carry an N-linked (GlcNAc...) asparagine glycan. Cys-66 and Cys-298 form a disulfide bridge. Residues 83–108 (SHWTLYMNVGGFLVGLFWSTLLGAWS) form a helical membrane-spanning segment. Residues 109-112 (DRVG) are Cytoplasmic-facing. A helical transmembrane segment spans residues 113–135 (RRPLLVLASLGLLLQAVVSIFVV). The Extracellular portion of the chain corresponds to 136–140 (QLQLH). The chain crosses the membrane as a helical span at residues 141-154 (IGFFVLGRALCALL). Residues 155 to 177 (GDFNGLLAASFASVADVSSNHSR) are Cytoplasmic-facing. H(+) is bound by residues Asp-156 and Glu-185. A helical transmembrane segment spans residues 178–203 (TFRMALLEACIGVAGTLASLLGGHWL). The Extracellular portion of the chain corresponds to 204–208 (RAQGY). The helical transmembrane segment at 209–227 (ANPFWLALAVLIVMTLYAA) threads the bilayer. Over 228-266 (FCFGETVKEPKSTRLFTLRHHRSIVQLYVVPAPEKSRMH) the chain is Cytoplasmic. Residues 267–289 (LALYSLAIFVVVTVHFGAQDILT) form a helical membrane-spanning segment. His-281 serves as a coordination point for H(+). At 290 to 302 (LYELSTPLCWDSK) the chain is on the extracellular side. The helical transmembrane segment at 303–325 (LIGYGSAAQHLPYLTSLLGLRLL) threads the bilayer. Residues 326-331 (QFCLAD) lie on the Cytoplasmic side of the membrane. The helical transmembrane segment at 332–351 (TWVAEIGLAFNILGMVVFAF) threads the bilayer. The Extracellular segment spans residues 352-355 (ATIT). The chain crosses the membrane as a helical span at residues 356 to 376 (PLMFTGYGLLFLSLVTTPVIR). Over 377–388 (AKLSKLVSESEQ) the chain is Cytoplasmic. A helical membrane pass occupies residues 389–414 (GALFSAVACVNSLAMLMASGIFNSLY). The Extracellular portion of the chain corresponds to 415-422 (PATLNFMK). The helical transmembrane segment at 423-441 (GFPFLLGAGLLFIPAILIG) threads the bilayer. The Cytoplasmic portion of the chain corresponds to 442 to 459 (VLEKVNPHPEFQQFPQNS).

Belongs to the major facilitator superfamily. SLC46A family. Monomer. Expressed almost exclusively in the small intestine: expressed at high level in the upper half of the small intestine (duodenum and jejunum), expression decreases downwardly in the subsequent quarter and is undetectable in the last quarter (the lowest ileum). Expressed at low level in other tissues, including liver.

The protein localises to the cell membrane. Its subcellular location is the apical cell membrane. It is found in the basolateral cell membrane. It localises to the endosome membrane. The protein resides in the cytoplasm. The enzyme catalyses folate(in) + H(+)(in) = folate(out) + H(+)(out). It catalyses the reaction (6S)-5-methyl-5,6,7,8-tetrahydrofolate(in) + H(+)(in) = (6S)-5-methyl-5,6,7,8-tetrahydrofolate(out) + H(+)(out). It carries out the reaction methotrexate(in) + H(+)(in) = methotrexate(out) + H(+)(out). The catalysed reaction is pemetrexed(in) + H(+)(in) = pemetrexed(out) + H(+)(out). In contrast to human ortholog, not inhibited by myricetin. Functionally, proton-coupled folate symporter that mediates folate absorption using an H(+) gradient as a driving force. Involved in the intestinal absorption of folates at the brush-border membrane of the proximal jejunum, and the transport from blood to cerebrospinal fluid across the choroid plexus. Functions at acidic pH via alternate outward- and inward-open conformation states. Protonation of residues in the outward open state primes the protein for transport. Binding of folate promotes breaking of salt bridge network and subsequent closure of the extracellular gate, leading to the inward-open state and release of protons and folate. Also able to transport antifolate drugs, such as methotrexate and pemetrexed. Involved in FOLR1-mediated endocytosis by serving as a route of export of folates from acidified endosomes. Also acts as a lower-affinity, pH-independent heme carrier protein and constitutes the main importer of heme in the intestine. Imports heme in the retina and retinal pigment epithelium, in neurons of the hippocampus, in hepatocytes and in the renal epithelial cells. Hence, participates in the trafficking of heme and increases intracellular iron content. In Rattus norvegicus (Rat), this protein is Proton-coupled folate transporter.